The primary structure comprises 140 residues: Transmembrane protein 234 homolog (140 aa).

The next 4 membrane-spanning stretches (helical) occupy residues 14-34 (IYAVLSILLVAIMWGATNPFI), 64-84 (WQYLLPLVINQLGSIVYVLTL), 88-108 (ELSLTVPMANSLTFVFTAITA), and 116-136 (SGWKIYCGMTLVILGTVICGL).

Belongs to the TMEM234 family.

It localises to the membrane. This is Transmembrane protein 234 homolog from Anopheles gambiae (African malaria mosquito).